A 109-amino-acid polypeptide reads, in one-letter code: uncharacterized protein (109 aa).

Residues 1–25 form a disordered region; it reads METKPNALTGTSLSSTSGQTTQKSI. Residues 8–22 show a composition bias toward low complexity; that stretch reads LTGTSLSSTSGQTTQ. The chain crosses the membrane as a helical span at residues 42 to 62; sequence TFGLMAILNLALLLWTLLATL. The disordered stretch occupies residues 84–109; that stretch reads TTLQKNTPSAKNGLKNTTNKHSHEDM. The segment covering 91 to 102 has biased composition (polar residues); it reads PSAKNGLKNTTN.

It is found in the host membrane. This is an uncharacterized protein from Bdellovibrio phage phiMH2K (Bacteriophage phiMH2K).